A 332-amino-acid polypeptide reads, in one-letter code: Eukaryotic translation initiation factor 3 subunit I (332 aa).

WD repeat units follow at residues 8–47 (GHER…GTYH), 48–87 (GHQG…LLHT), 144–182 (DESK…LLSS), and 279–318 (GHFG…FDFM).

This sequence belongs to the eIF-3 subunit I family. In terms of assembly, component of the eukaryotic translation initiation factor 3 (eIF-3) complex.

It is found in the cytoplasm. Its function is as follows. Component of the eukaryotic translation initiation factor 3 (eIF-3) complex, which is involved in protein synthesis of a specialized repertoire of mRNAs and, together with other initiation factors, stimulates binding of mRNA and methionyl-tRNAi to the 40S ribosome. The eIF-3 complex specifically targets and initiates translation of a subset of mRNAs involved in cell proliferation. The polypeptide is Eukaryotic translation initiation factor 3 subunit I (Phaeosphaeria nodorum (strain SN15 / ATCC MYA-4574 / FGSC 10173) (Glume blotch fungus)).